A 438-amino-acid polypeptide reads, in one-letter code: Probable glycine dehydrogenase (decarboxylating) subunit 1 (438 aa).

The protein belongs to the GcvP family. N-terminal subunit subfamily. As to quaternary structure, the glycine cleavage system is composed of four proteins: P, T, L and H. In this organism, the P 'protein' is a heterodimer of two subunits.

It catalyses the reaction N(6)-[(R)-lipoyl]-L-lysyl-[glycine-cleavage complex H protein] + glycine + H(+) = N(6)-[(R)-S(8)-aminomethyldihydrolipoyl]-L-lysyl-[glycine-cleavage complex H protein] + CO2. Functionally, the glycine cleavage system catalyzes the degradation of glycine. The P protein binds the alpha-amino group of glycine through its pyridoxal phosphate cofactor; CO(2) is released and the remaining methylamine moiety is then transferred to the lipoamide cofactor of the H protein. This Syntrophomonas wolfei subsp. wolfei (strain DSM 2245B / Goettingen) protein is Probable glycine dehydrogenase (decarboxylating) subunit 1.